The following is a 217-amino-acid chain: Uridine kinase (217 aa).

Position 17 to 24 (17 to 24 (GASASGKS)) interacts with ATP.

The protein belongs to the uridine kinase family.

The protein resides in the cytoplasm. It catalyses the reaction uridine + ATP = UMP + ADP + H(+). The enzyme catalyses cytidine + ATP = CMP + ADP + H(+). It functions in the pathway pyrimidine metabolism; CTP biosynthesis via salvage pathway; CTP from cytidine: step 1/3. Its pathway is pyrimidine metabolism; UMP biosynthesis via salvage pathway; UMP from uridine: step 1/1. This Haemophilus ducreyi (strain 35000HP / ATCC 700724) protein is Uridine kinase.